Consider the following 393-residue polypeptide: S-adenosylmethionine sensor upstream of mTORC1 (393 aa).

Residues 1–35 form a disordered region; it reads MDLRSSAETDPDLSENHPGSVPAELQSRKQEQEKL. Arg-94 is a binding site for S-adenosyl-L-methionine. The disordered stretch occupies residues 118-141; it reads DEKSARHATAGNANTDTNAPPQLS. The span at 125–136 shows a compositional bias: low complexity; the sequence is ATAGNANTDTNA. The S-adenosyl-L-methionine site is built by Gly-160, Asp-178, Asp-190, Phe-191, and Ser-232. Positions 362-393 are disordered; the sequence is ELPETPYDSDSGESQSSSAPFYELEDPILLQS.

This sequence belongs to the BMT2/SAMTOR family. In terms of assembly, interacts with the GATOR1 complex; interaction is disrupted when samtor binds S-adenosyl-L-methionine. Interacts with the KICSTOR complex; interaction is disrupted when bmt2/samtor binds S-adenosyl-L-methionine.

Functionally, S-adenosyl-L-methionine-binding protein that acts as an inhibitor of mTORC1 signaling via interaction with the GATOR1 and KICSTOR complexes. Acts as a sensor of S-adenosyl-L-methionine to signal methionine sufficiency to mTORC1: in presence of methionine, binds S-adenosyl-L-methionine, leading to disrupt interaction with the GATOR1 and KICSTOR complexes and promote mTORC1 signaling. Upon methionine starvation, S-adenosyl-L-methionine levels are reduced, thereby promoting the association with GATOR1 and KICSTOR, leading to inhibit mTORC1 signaling. Probably also acts as a S-adenosyl-L-methionine-dependent methyltransferase. This is S-adenosylmethionine sensor upstream of mTORC1 from Danio rerio (Zebrafish).